The following is a 137-amino-acid chain: Small ribosomal subunit protein bS6 (137 aa).

A disordered region spans residues 104-137; sequence SLVNKANNKPEPKPTKAKKEDVAPEAKEQAQTEA. A compositionally biased stretch (basic and acidic residues) spans 111-137; that stretch reads NKPEPKPTKAKKEDVAPEAKEQAQTEA.

The protein belongs to the bacterial ribosomal protein bS6 family.

Functionally, binds together with bS18 to 16S ribosomal RNA. The polypeptide is Small ribosomal subunit protein bS6 (Helicobacter hepaticus (strain ATCC 51449 / 3B1)).